Here is a 238-residue protein sequence, read N- to C-terminus: 2-C-methyl-D-erythritol 4-phosphate cytidylyltransferase (238 aa).

The protein belongs to the IspD/TarI cytidylyltransferase family. IspD subfamily.

It carries out the reaction 2-C-methyl-D-erythritol 4-phosphate + CTP + H(+) = 4-CDP-2-C-methyl-D-erythritol + diphosphate. The protein operates within isoprenoid biosynthesis; isopentenyl diphosphate biosynthesis via DXP pathway; isopentenyl diphosphate from 1-deoxy-D-xylulose 5-phosphate: step 2/6. Functionally, catalyzes the formation of 4-diphosphocytidyl-2-C-methyl-D-erythritol from CTP and 2-C-methyl-D-erythritol 4-phosphate (MEP). In Acinetobacter baumannii (strain ATCC 17978 / DSM 105126 / CIP 53.77 / LMG 1025 / NCDC KC755 / 5377), this protein is 2-C-methyl-D-erythritol 4-phosphate cytidylyltransferase.